Reading from the N-terminus, the 512-residue chain is Replication initiation protein (512 aa).

Essential for replication. Binds specifically to a 60-bp region corresponding to the putative origin of replication of pXO2. Also binds nonspecifically to single-stranded DNA with lower affinity. The chain is Replication initiation protein (repS) from Bacillus anthracis.